Reading from the N-terminus, the 608-residue chain is UvrABC system protein C (608 aa).

Positions 13–91 (HDAGVYRMYD…IKTYQPRYNV (79 aa)) constitute a GIY-YIG domain. Positions 201–236 (QQVLEHLIHKMEQASLALDFEEAARIRDQIQAVRAV) constitute a UVR domain.

The protein belongs to the UvrC family. Interacts with UvrB in an incision complex.

The protein localises to the cytoplasm. The UvrABC repair system catalyzes the recognition and processing of DNA lesions. UvrC both incises the 5' and 3' sides of the lesion. The N-terminal half is responsible for the 3' incision and the C-terminal half is responsible for the 5' incision. The chain is UvrABC system protein C from Pasteurella multocida (strain Pm70).